The following is a 148-amino-acid chain: 3-dehydroquinate dehydratase (148 aa).

Catalysis depends on tyrosine 24, which acts as the Proton acceptor. Positions 75, 81, and 88 each coordinate substrate. Residue histidine 101 is the Proton donor of the active site. Substrate contacts are provided by residues 102–103 (LS) and arginine 112.

It belongs to the type-II 3-dehydroquinase family. As to quaternary structure, homododecamer.

It carries out the reaction 3-dehydroquinate = 3-dehydroshikimate + H2O. It participates in metabolic intermediate biosynthesis; chorismate biosynthesis; chorismate from D-erythrose 4-phosphate and phosphoenolpyruvate: step 3/7. In terms of biological role, catalyzes a trans-dehydration via an enolate intermediate. This is 3-dehydroquinate dehydratase from Rhizobium meliloti (strain 1021) (Ensifer meliloti).